Reading from the N-terminus, the 319-residue chain is MTILAWCIAWVLDFIIGDPQHWPHPVRWIGRLITFVQRIVRRYCPGDKALRIGGGVMWVVVVGATWGVAWGVLALAQRIHPWFGWSVEVWMIFTTLAGRSLARAAQEVERPLRENDLAESRIKLSWIVGRDTSQLQPAQINRGVVETVAENTVDGIIAPLFFLFLGGAPLAMAYKAVNTLDSMVGYKHEKYRAIGMVSARMDDVANYLPARLSWLLLGIAAGLCRLSGWRALRIGWRDRYNHSSPNCAWSEACVAGALGIQLGGPNNYFGERVDKPWIGDAQRDISVDDISRTIRLMWVASTLALALFIAARCGLSGVA.

The next 5 membrane-spanning stretches (helical) occupy residues 56-76, 82-102, 153-173, 204-224, and 296-316; these read VMWV…LALA, WFGW…RSLA, VDGI…LAMA, VANY…AGLC, and LMWV…CGLS.

This sequence belongs to the CobD/CbiB family.

Its subcellular location is the cell membrane. Its pathway is cofactor biosynthesis; adenosylcobalamin biosynthesis. Functionally, converts cobyric acid to cobinamide by the addition of aminopropanol on the F carboxylic group. However, the true cosubstrate could be (R)-1-amino-2-propanol O-2-phosphate, leading to cobinamide phosphate. In Salmonella paratyphi B (strain ATCC BAA-1250 / SPB7), this protein is Cobalamin biosynthesis protein CbiB.